The primary structure comprises 443 residues: FAD-dependent monooxygenase orf3 (443 aa).

Residues 5–25 (SIEVAIIGAGITGITLALGLL) traverse the membrane as a helical segment. FAD contacts are provided by glutamate 35 and glycine 48. Residues asparagine 75 and asparagine 87 are each glycosylated (N-linked (GlcNAc...) asparagine). Residue arginine 116 participates in FAD binding. Residue arginine 199 is part of the active site. FAD-binding residues include aspartate 315 and alanine 328.

Belongs to the paxM FAD-dependent monooxygenase family. FAD serves as cofactor.

The protein localises to the membrane. The protein operates within secondary metabolite biosynthesis. In terms of biological role, FAD-dependent monooxygenase; part of the gene cluster that mediates the biosynthesis of nigerpyrone and its derivatives carbonarone A and pestalamide A. The biosynthesis pathway begins with the polyketide assembly by epaA to form phenylacetyl triketide precursor from successive condensation of two malonyl-CoA, presumably with one phenylacetyl-CoA starter unit produced by the phenylacetyl-CoA ligase epaB. For the nigerpyrone biosynthesis, the reactive polyketide chain is released as an aldehyde through the R-domain. A nonenzymatic cyclization and dehydration may create nigerpyrone. For the biosynthesis of carbonarone A and pestalamide A, an extra methyl group is added through the C-methyltransferase domain. Several further steps involving the dehydrogenase orf1, the cytochrome P450 monooxygenase orf2 and the FAD-dependent monooxygenase orf3 are required to form a carbonarone A precursor which is converted to carbonarone A via cyclization. The O-acetyltransferase epaC could catalyze the transfer of 2-methylsuccinyl-CoA, a common intermediate in the ethylmalonyl-CoA pathway, to generate the final product pestalamide A. This is FAD-dependent monooxygenase orf3 from Aspergillus niger (strain ATCC MYA-4892 / CBS 513.88 / FGSC A1513).